The chain runs to 634 residues: MFPKVDNPLGHQETRTGATRSQRPQAPKATAASSDELSEESWPSSSWTPSPASTTEGQSTSPPCNLIDNEDSIVAKYINRFRQAQPTSREDRQPAGPTSADFWWLQPTADSSGHLAAGAGEPTGRSAVTGPSPTGVSSTSLASAPLQKVKQSLNSWNSSLLDLETLSLQSRAARLLKRSKASLNDASSSSFPISSDGLSPSSVTFNPDSNKSSNPKEPVLGAPGPSQAIPAPRPASSQATLKPEDDILYQWRQRRKLEQSLQGAGDGTWVLPRMPALTTQTPPVSAVNLGSQDTQPNCTAPCGSVAQPPPSQAFYMERPPLSGPSPHIWAPGTHGVLWAPQANPWVSFGMLPTTLLTSTLAPLASFPVPPTSTSTTPAPTPTPQVCIPGPPTSAPPPCASTPASTLPLPDTPQGPAIPELSSSIQPKKVGPKPRRVSTSSHQKTTVPDTTAFEGPCSQLRGALSQVVTARLFPDSPEDTPPSEADFRKVQAIPSQAKVLRPPPESRRGSKTESRKSQVTLPADAGDPQPATAPKASTLLEVQPREFKMSAPRMGAGDPLTIVPPASSHAPSEDLLSQATKLLQAAEDSDGSEFQEDPVLQLLRAQRAELRQQKRWMPSYLSSWTTLKTRDLRLL.

5 disordered regions span residues Met1–Asn69, Phe81–Ala142, Asp185–Lys242, Val368–Pro455, and Phe472–Lys534. Positions Arg15–Pro24 are enriched in polar residues. Low complexity-rich tracts occupy residues Glu40 to Glu56, Val128 to Ser140, and Asp185 to Ser202. Positions Val203 to Pro215 are enriched in polar residues. Residues Val368–Pro377 are compositionally biased toward low complexity. The span at Ala378–Ala399 shows a compositional bias: pro residues. Positions Val436–Asp448 are enriched in polar residues. Residues Pro503–Lys515 show a composition bias toward basic and acidic residues. The residue at position 588 (Ser588) is a Phosphoserine.

The protein resides in the cytoplasm. Its subcellular location is the cytoskeleton. It is found in the microtubule organizing center. It localises to the centrosome. The protein is Proline and serine-rich protein 3 (Proser3) of Mus musculus (Mouse).